Reading from the N-terminus, the 151-residue chain is Transcriptional repressor NrdR (151 aa).

Residues 1-24 (MRCPKCQHNGTRVLDSRPSDESRS) form a disordered region. A zinc finger lies at 3–34 (CPKCQHNGTRVLDSRPSDESRSIKRRRECEKC). Residues 14-24 (LDSRPSDESRS) are compositionally biased toward basic and acidic residues. Residues 49–139 (LLIIKKDGMR…VYRQFKDINV (91 aa)) enclose the ATP-cone domain.

Belongs to the NrdR family. Zn(2+) is required as a cofactor.

In terms of biological role, negatively regulates transcription of bacterial ribonucleotide reductase nrd genes and operons by binding to NrdR-boxes. The polypeptide is Transcriptional repressor NrdR (Shouchella clausii (strain KSM-K16) (Alkalihalobacillus clausii)).